The primary structure comprises 809 residues: ATP-dependent RNA helicase HrpB (809 aa).

The Helicase ATP-binding domain maps to 14–177; the sequence is LTALDCAPQV…LPEAPVVISE (164 aa). 27-34 is an ATP binding site; sequence APTGAGKS. The DEFH box motif lies at 123–126; sequence DEFH. Residues 195 to 368 form the Helicase C-terminal domain; the sequence is RFDDAVAVAT…GLLMELLQWG (174 aa). Positions 788–809 are disordered; the sequence is PKHVWPDDPANTAPTRRTKKYS.

It belongs to the DEAD box helicase family.

It catalyses the reaction ATP + H2O = ADP + phosphate + H(+). The sequence is that of ATP-dependent RNA helicase HrpB (hrpB) from Escherichia coli (strain K12).